The primary structure comprises 204 residues: Methylthioribulose-1-phosphate dehydratase (204 aa).

Residues histidine 95 and histidine 97 each contribute to the Zn(2+) site.

Belongs to the aldolase class II family. MtnB subfamily. Requires Zn(2+) as cofactor.

It carries out the reaction 5-(methylsulfanyl)-D-ribulose 1-phosphate = 5-methylsulfanyl-2,3-dioxopentyl phosphate + H2O. It participates in amino-acid biosynthesis; L-methionine biosynthesis via salvage pathway; L-methionine from S-methyl-5-thio-alpha-D-ribose 1-phosphate: step 2/6. In terms of biological role, catalyzes the dehydration of methylthioribulose-1-phosphate (MTRu-1-P) into 2,3-diketo-5-methylthiopentyl-1-phosphate (DK-MTP-1-P). The polypeptide is Methylthioribulose-1-phosphate dehydratase (Parvibaculum lavamentivorans (strain DS-1 / DSM 13023 / NCIMB 13966)).